A 309-amino-acid chain; its full sequence is UDP-N-acetylenolpyruvoylglucosamine reductase (309 aa).

Residues 33 to 195 (VGGQAETLFR…VRARLRTRPG (163 aa)) form the FAD-binding PCMH-type domain. R175 is a catalytic residue. S224 functions as the Proton donor in the catalytic mechanism. E294 is a catalytic residue.

It belongs to the MurB family. The cofactor is FAD.

Its subcellular location is the cytoplasm. The enzyme catalyses UDP-N-acetyl-alpha-D-muramate + NADP(+) = UDP-N-acetyl-3-O-(1-carboxyvinyl)-alpha-D-glucosamine + NADPH + H(+). Its pathway is cell wall biogenesis; peptidoglycan biosynthesis. Its function is as follows. Cell wall formation. This chain is UDP-N-acetylenolpyruvoylglucosamine reductase, found in Granulibacter bethesdensis (strain ATCC BAA-1260 / CGDNIH1).